The sequence spans 320 residues: ATP-dependent 6-phosphofructokinase (320 aa).

An ATP-binding site is contributed by glycine 12. Residues 22–26 (RGVVR) and 55–60 (RYSVSD) each bind ADP. ATP-binding positions include 73 to 74 (RF) and 103 to 106 (GDGS). Residue aspartate 104 participates in Mg(2+) binding. 126–128 (TID) provides a ligand contact to substrate. Aspartate 128 (proton acceptor) is an active-site residue. Arginine 155 lines the ADP pocket. Residues arginine 163 and 170–172 (MGR) each bind substrate. ADP contacts are provided by residues 186–188 (GCE), lysine 212, and 214–216 (KKH). Substrate contacts are provided by residues glutamate 223, arginine 244, and 250-253 (HIQR).

The protein belongs to the phosphofructokinase type A (PFKA) family. ATP-dependent PFK group I subfamily. Prokaryotic clade 'B1' sub-subfamily. In terms of assembly, homotetramer. Mg(2+) serves as cofactor.

Its subcellular location is the cytoplasm. It catalyses the reaction beta-D-fructose 6-phosphate + ATP = beta-D-fructose 1,6-bisphosphate + ADP + H(+). It participates in carbohydrate degradation; glycolysis; D-glyceraldehyde 3-phosphate and glycerone phosphate from D-glucose: step 3/4. Allosterically activated by ADP and other diphosphonucleosides, and allosterically inhibited by phosphoenolpyruvate. Its function is as follows. Catalyzes the phosphorylation of D-fructose 6-phosphate to fructose 1,6-bisphosphate by ATP, the first committing step of glycolysis. This chain is ATP-dependent 6-phosphofructokinase, found in Buchnera aphidicola subsp. Acyrthosiphon pisum (strain 5A).